Reading from the N-terminus, the 125-residue chain is Ribosome-binding factor A (125 aa).

The protein belongs to the RbfA family. In terms of assembly, monomer. Binds 30S ribosomal subunits, but not 50S ribosomal subunits or 70S ribosomes.

It localises to the cytoplasm. One of several proteins that assist in the late maturation steps of the functional core of the 30S ribosomal subunit. Associates with free 30S ribosomal subunits (but not with 30S subunits that are part of 70S ribosomes or polysomes). Required for efficient processing of 16S rRNA. May interact with the 5'-terminal helix region of 16S rRNA. The sequence is that of Ribosome-binding factor A from Wigglesworthia glossinidia brevipalpis.